The sequence spans 792 residues: Starch synthase 2, chloroplastic/amyloplastic (792 aa).

A chloroplast-targeting transit peptide spans 1-55; sequence MASVAESSFPLLCQIKTQRRINSSTLRHSRVSYHDLPSGSLSFRSRSFVLGHRCK. The disordered stretch occupies residues 105-295; sequence IKESTPDLDD…GKDEEKPPPL (191 aa). Polar residues predominate over residues 145–156; the sequence is GSVSPSTYGKSS. A compositionally biased stretch (low complexity) spans 179 to 192; that stretch reads SSASVISSSPVTSP. The segment covering 221-233 has biased composition (polar residues); that stretch reads SVMTSPEKTSDPV. Basic and acidic residues predominate over residues 266–275; it reads KTEKYVEKTP. An ADP-alpha-D-glucose-binding site is contributed by Lys-315.

The protein belongs to the glycosyltransferase 1 family. Bacterial/plant glycogen synthase subfamily. As to expression, expressed in roots, leaves and flowers.

Its subcellular location is the plastid. It is found in the chloroplast. The protein resides in the amyloplast. It catalyses the reaction [(1-&gt;4)-alpha-D-glucosyl](n) + ADP-alpha-D-glucose = [(1-&gt;4)-alpha-D-glucosyl](n+1) + ADP + H(+). It participates in glycan biosynthesis; starch biosynthesis. Functionally, involved in the synthesis of glycan chains within amylopectin in leaves. Is required to produce chains with a degree of polymerization of 12 to 25 (DP12-DP25). This chain is Starch synthase 2, chloroplastic/amyloplastic (SS2), found in Arabidopsis thaliana (Mouse-ear cress).